Consider the following 164-residue polypeptide: Endoribonuclease YbeY (164 aa).

Zn(2+) is bound by residues His111, His115, and His121. Residues 140 to 164 are disordered; that stretch reads ELGHPDPYADDDAQKHSTVTIKDSE. Residues 155-164 are compositionally biased toward polar residues; sequence HSTVTIKDSE.

Belongs to the endoribonuclease YbeY family. Zn(2+) serves as cofactor.

The protein resides in the cytoplasm. Single strand-specific metallo-endoribonuclease involved in late-stage 70S ribosome quality control and in maturation of the 3' terminus of the 16S rRNA. The chain is Endoribonuclease YbeY from Pseudomonas fluorescens (strain SBW25).